A 223-amino-acid chain; its full sequence is Deoxyribose-phosphate aldolase (223 aa).

Aspartate 89 functions as the Proton donor/acceptor in the catalytic mechanism. The active-site Schiff-base intermediate with acetaldehyde is lysine 152. Catalysis depends on lysine 181, which acts as the Proton donor/acceptor.

Belongs to the DeoC/FbaB aldolase family. DeoC type 1 subfamily.

Its subcellular location is the cytoplasm. The catalysed reaction is 2-deoxy-D-ribose 5-phosphate = D-glyceraldehyde 3-phosphate + acetaldehyde. It participates in carbohydrate degradation; 2-deoxy-D-ribose 1-phosphate degradation; D-glyceraldehyde 3-phosphate and acetaldehyde from 2-deoxy-alpha-D-ribose 1-phosphate: step 2/2. In terms of biological role, catalyzes a reversible aldol reaction between acetaldehyde and D-glyceraldehyde 3-phosphate to generate 2-deoxy-D-ribose 5-phosphate. The protein is Deoxyribose-phosphate aldolase of Listeria monocytogenes serotype 4a (strain HCC23).